The chain runs to 1146 residues: Transcription-repair-coupling factor (1146 aa).

The 162-residue stretch at 617-778 (DMCQPKAMDR…MNGIRDLSII (162 aa)) folds into the Helicase ATP-binding domain. 630–637 (GDVGFGKT) is an ATP binding site. The short motif at 731–734 (DEEH) is the DEEH box element. Residues 800–953 (VREAILREIL…GFILATHDLE (154 aa)) form the Helicase C-terminal domain.

The protein in the N-terminal section; belongs to the UvrB family. This sequence in the C-terminal section; belongs to the helicase family. RecG subfamily.

It is found in the cytoplasm. Its function is as follows. Couples transcription and DNA repair by recognizing RNA polymerase (RNAP) stalled at DNA lesions. Mediates ATP-dependent release of RNAP and its truncated transcript from the DNA, and recruitment of nucleotide excision repair machinery to the damaged site. This chain is Transcription-repair-coupling factor, found in Haemophilus influenzae (strain ATCC 51907 / DSM 11121 / KW20 / Rd).